A 264-amino-acid polypeptide reads, in one-letter code: uncharacterized protein (264 aa).

Residues 7–27 traverse the membrane as a helical segment; sequence LTLGICLVLLIILIVGYVIMT.

Belongs to the staphylococcal tandem lipoprotein family.

Its subcellular location is the cell membrane. This is an uncharacterized protein from Staphylococcus aureus (strain MW2).